The primary structure comprises 233 residues: Syntaxin-52 (233 aa).

The Cytoplasmic segment spans residues 1-209 (MASSSDPWMR…NKSMKSGCSC (209 aa)). The region spanning 137–199 (RQVMREQDEG…RRVQKSLALM (63 aa)) is the t-SNARE coiled-coil homology domain. A helical; Anchor for type IV membrane protein transmembrane segment spans residues 210 to 230 (MSMLLSVLGIVGLALVIWLLV). Residues 231–233 (KYL) are Vesicular-facing.

This sequence belongs to the syntaxin family. In terms of assembly, interacts either with VTI11 and SYP21, or with VTI11 and SYP22 in the prevacuolar compartment, or with VTI12 and SYP61 in the trans-Golgi network to form t-SNARE complexes. Expressed in root, leaf, stem, flower and silique.

It is found in the golgi apparatus. It localises to the trans-Golgi network membrane. The protein localises to the prevacuolar compartment membrane. In terms of biological role, vesicle trafficking protein that functions in the secretory pathway. The polypeptide is Syntaxin-52 (SYP52) (Arabidopsis thaliana (Mouse-ear cress)).